A 132-amino-acid chain; its full sequence is Translation initiation factor 5A (132 aa).

Residue Lys-36 is modified to Hypusine.

Belongs to the eIF-5A family.

The protein resides in the cytoplasm. Its function is as follows. Functions by promoting the formation of the first peptide bond. In Pyrobaculum neutrophilum (strain DSM 2338 / JCM 9278 / NBRC 100436 / V24Sta) (Thermoproteus neutrophilus), this protein is Translation initiation factor 5A (eIF5A).